A 49-amino-acid chain; its full sequence is Large ribosomal subunit protein bL32 (49 aa).

The segment at alanine 25–lysine 49 is disordered.

The protein belongs to the bacterial ribosomal protein bL32 family.

This is Large ribosomal subunit protein bL32 from Sulfurimonas denitrificans (strain ATCC 33889 / DSM 1251) (Thiomicrospira denitrificans (strain ATCC 33889 / DSM 1251)).